The primary structure comprises 257 residues: E3 ubiquitin-protein ligase RNF170 (257 aa).

The Lumenal segment spans residues 1 to 24 (MADNQEGRPYFPLDEGSIIEGVSD). A helical membrane pass occupies residues 25-45 (QVIVVVLLSFVAVGSLLYLLL). The Cytoplasmic portion of the chain corresponds to 46–200 (RNDEQNIHPE…GGLFWMFRIR (155 aa)). The RING-type zinc finger occupies 87–130 (CPVCLQQATFPVETNCGHLFCGSCIIAYWRYGSWLGAINCPICR). A helical transmembrane segment spans residues 201 to 221 (IVLCLLGALFYLVSPLDIIPE). Position 222 (Ala222) is a topological domain, lumenal. A helical membrane pass occupies residues 223–243 (VFGLLGFLDDFFVLFLLLIYI). Residues 244–257 (SIMYREVVTQRLYR) are Cytoplasmic-facing.

It localises to the endoplasmic reticulum membrane. It carries out the reaction S-ubiquitinyl-[E2 ubiquitin-conjugating enzyme]-L-cysteine + [acceptor protein]-L-lysine = [E2 ubiquitin-conjugating enzyme]-L-cysteine + N(6)-ubiquitinyl-[acceptor protein]-L-lysine.. It participates in protein modification; protein ubiquitination. Its function is as follows. E3 ubiquitin-protein ligase that plays an essential role in stimulus-induced inositol 1,4,5-trisphosphate receptor (ITPR) ubiquitination and degradation via the endoplasmic reticulum-associated degradation (ERAD) pathway. Also involved in ITPR turnover in resting cells. This chain is E3 ubiquitin-protein ligase RNF170 (rnf170), found in Xenopus tropicalis (Western clawed frog).